The sequence spans 96 residues: Beta-defensin 132 (96 aa).

The first 22 residues, 1–22, serve as a signal peptide directing secretion; the sequence is MKFLLLVLAALRFLTQVIPASG. Intrachain disulfides connect cysteine 27/cysteine 55, cysteine 35/cysteine 49, and cysteine 39/cysteine 56. The disordered stretch occupies residues 74 to 96; the sequence is HWQSRRRNTQRKDKKQQTTVTSS. Positions 76–87 are enriched in basic residues; sequence QSRRRNTQRKDK.

The protein belongs to the beta-defensin family.

Its subcellular location is the secreted. Has antibacterial activity. The polypeptide is Beta-defensin 132 (DEFB132) (Hylobates lar (Lar gibbon)).